A 322-amino-acid polypeptide reads, in one-letter code: Probable heme-iron transport system permease protein IsdF (322 aa).

9 helical membrane passes run 9-29, 61-81, 89-109, 114-134, 143-163, 179-199, 233-253, 267-287, and 294-314; these read LLFL…FVTG, ILIA…LQAA, ANII…MLFI, FYLP…IIVL, VSMI…LEIL, IWSD…LTLL, VFLA…GIIV, VLIP…DLLG, and LEIP…IYLI.

The protein belongs to the binding-protein-dependent transport system permease family. FecCD subfamily.

It localises to the cell membrane. Part of the binding-protein-dependent transport system for heme-iron. Responsible for the translocation of the substrate across the membrane. In Staphylococcus aureus (strain bovine RF122 / ET3-1), this protein is Probable heme-iron transport system permease protein IsdF (isdF).